Consider the following 289-residue polypeptide: Pteridine reductase 1 (289 aa).

14–41 is a binding site for NADP(+); it reads GAAKRLGSSIAEALHAEGYTVCLHYHRS. Residue S176 coordinates substrate. Catalysis depends on Y195, which acts as the Proton acceptor. Position 195-199 (195-199) interacts with NADP(+); sequence YTMAK.

Belongs to the short-chain dehydrogenases/reductases (SDR) family. As to quaternary structure, homotetramer.

It carries out the reaction (6R)-L-erythro-5,6,7,8-tetrahydrobiopterin + 2 NADP(+) = L-erythro-biopterin + 2 NADPH + 2 H(+). It participates in cofactor biosynthesis; tetrahydrobiopterin biosynthesis; tetrahydrobiopterin from biopterin: step 1/1. Functionally, exhibits a NADPH-dependent biopterin reductase activity. Has good activity with folate and significant activity with dihydrofolate and dihydrobiopterin, but not with quinonoid dihydrobiopterin. Confers resistance to methotrexate (MTX). The polypeptide is Pteridine reductase 1 (PTR1) (Leishmania tarentolae (Sauroleishmania tarentolae)).